Here is a 559-residue protein sequence, read N- to C-terminus: Chromatin assembly factor 1 subunit B (559 aa).

WD repeat units lie at residues 11-54, 64-103, 127-166, 169-208, 228-279, 299-340, and 344-385; these read HNKE…DGKA, RHTK…EPEQ, GHLE…KISI, EHKS…VAFN, FHDD…RPIA, ELRP…PFGY, and IHYH…IPLK. The tract at residues 386–559 is disordered; it reads EKPVLNMRTP…NKGGTESLDP (174 aa). At Thr-394 the chain carries Phosphothreonine. At Ser-409 the chain carries Phosphoserine. Thr-419 bears the Phosphothreonine mark. Position 429 is a phosphoserine (Ser-429). A compositionally biased stretch (low complexity) spans 430–444; the sequence is PGTTPPQARQAPAPT. Thr-433 bears the Phosphothreonine mark. Ser-458 carries the phosphoserine modification. The segment covering 469–495 has biased composition (polar residues); that stretch reads LQPSSQNTKAHPSRRVTLNTLQAWSKT. Lys-494 is subject to N6-acetyllysine. A phosphothreonine mark is found at Thr-495, Thr-509, Thr-521, and Thr-531. Positions 509-526 are enriched in low complexity; that stretch reads TPPSSVPTSVISTPSTEE. Residue Ser-538 is modified to Phosphoserine. Basic and acidic residues predominate over residues 541 to 552; that stretch reads ELKRPRLDENKG.

This sequence belongs to the WD repeat HIR1 family. Subunit of the CAF-1 complex that contains RBBP4, CHAF1B and CHAF1A. CHAF1A binds directly to CHAF1B. Only minor amounts of RBBP4 are complexed with CHAF1A and CHAF1B in G1 phase. In G2 and S phase also monomeric CHAF1B is detected. Interacts with histones H3.1, H3.2 and H3.1t. In terms of processing, differentially phosphorylated during cell cycle. During mitosis the p60 subunit of inactive CAF-1 is hyperphosphorylated and displaced into the cytosol. Progressivly dephosphorylated from G1 to S and G2 phase. Phosphorylated p60 is recruited to chromatin undergoing DNA repair after UV irradiation in G1, S or G2 phases.

Its subcellular location is the nucleus. It is found in the cytoplasm. In terms of biological role, acts as a component of the histone chaperone complex chromatin assembly factor 1 (CAF-1), which assembles histone octamers onto DNA during replication and repair. CAF-1 performs the first step of the nucleosome assembly process, bringing newly synthesized histones H3 and H4 to replicating DNA; histones H2A/H2B can bind to this chromatin precursor subsequent to DNA replication to complete the histone octamer. This is Chromatin assembly factor 1 subunit B from Homo sapiens (Human).